We begin with the raw amino-acid sequence, 466 residues long: Cysteine--tRNA ligase (466 aa).

Position 28 (cysteine 28) interacts with Zn(2+). Residues 30-40 (PTVYNFFHIGN) carry the 'HIGH' region motif. Zn(2+) contacts are provided by cysteine 208, histidine 233, and glutamate 237. The 'KMSKS' region signature appears at 265 to 269 (KMSKS). Lysine 268 contributes to the ATP binding site.

Belongs to the class-I aminoacyl-tRNA synthetase family. As to quaternary structure, monomer. Zn(2+) serves as cofactor.

It localises to the cytoplasm. The enzyme catalyses tRNA(Cys) + L-cysteine + ATP = L-cysteinyl-tRNA(Cys) + AMP + diphosphate. This is Cysteine--tRNA ligase from Clostridium perfringens (strain ATCC 13124 / DSM 756 / JCM 1290 / NCIMB 6125 / NCTC 8237 / Type A).